Consider the following 128-residue polypeptide: Ribosome-binding factor A (128 aa).

The protein belongs to the RbfA family. As to quaternary structure, monomer. Binds 30S ribosomal subunits, but not 50S ribosomal subunits or 70S ribosomes.

Its subcellular location is the cytoplasm. One of several proteins that assist in the late maturation steps of the functional core of the 30S ribosomal subunit. Associates with free 30S ribosomal subunits (but not with 30S subunits that are part of 70S ribosomes or polysomes). Required for efficient processing of 16S rRNA. May interact with the 5'-terminal helix region of 16S rRNA. This is Ribosome-binding factor A from Acidithiobacillus ferrooxidans (strain ATCC 23270 / DSM 14882 / CIP 104768 / NCIMB 8455) (Ferrobacillus ferrooxidans (strain ATCC 23270)).